The following is a 342-amino-acid chain: Holliday junction branch migration complex subunit RuvB (342 aa).

The tract at residues Met-1–Tyr-185 is large ATPase domain (RuvB-L). ATP-binding positions include Leu-24, Arg-25, Gly-66, Lys-69, Thr-70, Ser-71, Glu-132–Tyr-134, Arg-175, Tyr-185, and Arg-222. Thr-70 contributes to the Mg(2+) binding site. Residues Gly-186–Glu-256 form a small ATPAse domain (RuvB-S) region. The interval Ala-259 to Val-342 is head domain (RuvB-H). DNA contacts are provided by Arg-314 and Arg-319.

This sequence belongs to the RuvB family. In terms of assembly, homohexamer. Forms an RuvA(8)-RuvB(12)-Holliday junction (HJ) complex. HJ DNA is sandwiched between 2 RuvA tetramers; dsDNA enters through RuvA and exits via RuvB. An RuvB hexamer assembles on each DNA strand where it exits the tetramer. Each RuvB hexamer is contacted by two RuvA subunits (via domain III) on 2 adjacent RuvB subunits; this complex drives branch migration. In the full resolvosome a probable DNA-RuvA(4)-RuvB(12)-RuvC(2) complex forms which resolves the HJ.

Its subcellular location is the cytoplasm. It carries out the reaction ATP + H2O = ADP + phosphate + H(+). Its function is as follows. The RuvA-RuvB-RuvC complex processes Holliday junction (HJ) DNA during genetic recombination and DNA repair, while the RuvA-RuvB complex plays an important role in the rescue of blocked DNA replication forks via replication fork reversal (RFR). RuvA specifically binds to HJ cruciform DNA, conferring on it an open structure. The RuvB hexamer acts as an ATP-dependent pump, pulling dsDNA into and through the RuvAB complex. RuvB forms 2 homohexamers on either side of HJ DNA bound by 1 or 2 RuvA tetramers; 4 subunits per hexamer contact DNA at a time. Coordinated motions by a converter formed by DNA-disengaged RuvB subunits stimulates ATP hydrolysis and nucleotide exchange. Immobilization of the converter enables RuvB to convert the ATP-contained energy into a lever motion, pulling 2 nucleotides of DNA out of the RuvA tetramer per ATP hydrolyzed, thus driving DNA branch migration. The RuvB motors rotate together with the DNA substrate, which together with the progressing nucleotide cycle form the mechanistic basis for DNA recombination by continuous HJ branch migration. Branch migration allows RuvC to scan DNA until it finds its consensus sequence, where it cleaves and resolves cruciform DNA. This is Holliday junction branch migration complex subunit RuvB from Anaeromyxobacter dehalogenans (strain 2CP-C).